The primary structure comprises 268 residues: Testis-specific serine/threonine-protein kinase 3 (268 aa).

In terms of domain architecture, Protein kinase spans 10–265; sequence YQLGKTIGEG…IEEVSWHPWL (256 aa). ATP is bound by residues 16–24 and Lys-39; that span reads IGEGTYSKV. Asp-134 functions as the Proton acceptor in the catalytic mechanism. Ser-166 bears the Phosphoserine mark. A Phosphothreonine modification is found at Thr-168.

This sequence belongs to the protein kinase superfamily. CAMK Ser/Thr protein kinase family. Mg(2+) serves as cofactor. Mn(2+) is required as a cofactor. In terms of processing, autophosphorylated at Ser-166. Phosphorylation at Thr-168 by PDPK1 activates the serine/threonine protein kinase activity.

It is found in the cell projection. The protein localises to the cilium. The protein resides in the flagellum. It carries out the reaction L-seryl-[protein] + ATP = O-phospho-L-seryl-[protein] + ADP + H(+). The enzyme catalyses L-threonyl-[protein] + ATP = O-phospho-L-threonyl-[protein] + ADP + H(+). With respect to regulation, activated by phosphorylation on Thr-168 by PDPK1. Functionally, serine/threonine protein kinase required for spermatid development and male fertility. This Homo sapiens (Human) protein is Testis-specific serine/threonine-protein kinase 3.